The following is a 249-amino-acid chain: 2,3-bisphosphoglycerate-dependent phosphoglycerate mutase (249 aa).

Substrate-binding positions include Arg-11–Asn-18, Thr-24–Gly-25, Arg-63, Glu-90–Tyr-93, Lys-101, Arg-117–Arg-118, and Gly-185–Asn-186. His-12 serves as the catalytic Tele-phosphohistidine intermediate. The active-site Proton donor/acceptor is the Glu-90.

This sequence belongs to the phosphoglycerate mutase family. BPG-dependent PGAM subfamily.

It carries out the reaction (2R)-2-phosphoglycerate = (2R)-3-phosphoglycerate. It participates in carbohydrate degradation; glycolysis; pyruvate from D-glyceraldehyde 3-phosphate: step 3/5. Its function is as follows. Catalyzes the interconversion of 2-phosphoglycerate and 3-phosphoglycerate. This Leifsonia xyli subsp. xyli (strain CTCB07) protein is 2,3-bisphosphoglycerate-dependent phosphoglycerate mutase.